The following is a 361-amino-acid chain: Aromatic amino acid aminotransferase (361 aa).

Position 215 is an N6-(pyridoxal phosphate)lysine (lysine 215).

It belongs to the class-II pyridoxal-phosphate-dependent aminotransferase family. As to quaternary structure, homodimer. It depends on pyridoxal 5'-phosphate as a cofactor.

It catalyses the reaction an aromatic L-alpha-amino acid + 2-oxoglutarate = an aromatic oxo-acid + L-glutamate. In terms of biological role, aminotransferase that catalyzes the conversion of aromatic amino acids and 2-oxoglutarate into corresponding aromatic oxo acids and L-glutamate. This chain is Aromatic amino acid aminotransferase, found in Mycolicibacterium smegmatis (strain ATCC 700084 / mc(2)155) (Mycobacterium smegmatis).